Here is a 136-residue protein sequence, read N- to C-terminus: Large ribosomal subunit protein uL16c (136 aa).

Positions methionine 1 to methionine 17 are enriched in basic residues. The segment at methionine 1–asparagine 25 is disordered.

Belongs to the universal ribosomal protein uL16 family. As to quaternary structure, part of the 50S ribosomal subunit.

It localises to the plastid. It is found in the chloroplast. The protein is Large ribosomal subunit protein uL16c of Anthoceros angustus (Hornwort).